Here is a 445-residue protein sequence, read N- to C-terminus: D-serine transporter DsdX (445 aa).

At 1 to 4 (MHSQ) the chain is on the cytoplasmic side. The helical transmembrane segment at 5–25 (IWVVSTLLISIVLIVLTIVKF) threads the bilayer. Residues 26–28 (KFH) lie on the Periplasmic side of the membrane. A helical membrane pass occupies residues 29–49 (PFLALLLASFFVGTMMGMGPL). Topologically, residues 50-56 (DMVNAIE) are cytoplasmic. Residues 57–77 (SGIGGTLGFLAAVIGLGTILG) form a helical membrane-spanning segment. At 78 to 105 (KMMEVSGAAERIGLTLQRCRWLSVDVIM) the chain is on the periplasmic side. A helical transmembrane segment spans residues 106-126 (VLVGLICGITLFVEVGVVLLI). The Cytoplasmic portion of the chain corresponds to 127-139 (PLAFSIAKKTNTS). Residues 140-160 (LLKLAIPLCTALMAVHCVVPP) traverse the membrane as a helical segment. The Periplasmic portion of the chain corresponds to 161-177 (HPAALYVANKLGADIGS). Residues 178-198 (VIVYGLLVGLMASLIGGPLFL) traverse the membrane as a helical segment. The Cytoplasmic segment spans residues 199 to 223 (KFLGQRLPFKPVPTEFADLKVRDEK). Residues 224-244 (TLPSLGATLFTILLPIALMLV) traverse the membrane as a helical segment. Residues 245–257 (KTIAELNMARESG) are Periplasmic-facing. Residues 258-278 (LYILVEFIGNPITAMFIAVFV) traverse the membrane as a helical segment. Residues 279–301 (AYYVLGIRQHMSMGTMLTHTENG) are Cytoplasmic-facing. Residues 302 to 322 (FGSIANILLIIGAGGAFNAIL) traverse the membrane as a helical segment. Over 323–342 (KSSSLADTLAVILSNMHMHP) the chain is Periplasmic. Helical transmembrane passes span 343–363 (ILLA…ATVA), 364–384 (MMGA…ISPE), and 385–405 (IIAI…DSLF). The Cytoplasmic segment spans residues 406-424 (WLVKQYCGATLNETFKYYT). A helical membrane pass occupies residues 425–445 (TATFIASVVALAGTFLLSFII).

The protein belongs to the GntP permease family.

The protein localises to the cell inner membrane. Its function is as follows. A D-serine-specific transporter, may function as a H(+) symporter. The chain is D-serine transporter DsdX from Escherichia coli (strain K12).